Reading from the N-terminus, the 426-residue chain is UPF0329 protein ECU06_0040 (426 aa).

Residues 136–172 show a composition bias toward basic and acidic residues; sequence RQRKREEETERSVKELVGDEEKAKSKEEKAKSKEEKA. A disordered region spans residues 136-230; that stretch reads RQRKREEETE…GGKKKSKGGR (95 aa). Residues 220–230 show a composition bias toward basic residues; it reads KGGKKKSKGGR.

This sequence belongs to the UPF0329 family.

The protein is UPF0329 protein ECU06_0040 of Encephalitozoon cuniculi (strain GB-M1) (Microsporidian parasite).